Consider the following 601-residue polypeptide: MLMHHDPLLPGAFSEELWQQVSKRLLAKVIEEFAYERVFGVVEEKPGHYRIDIDELQYRFKAKRYVFDNLSVDPASLFKRHGNSDAPLHDPLAFCAEVLPKLGVKPMTVAHFIKELGNTLVSDAHIAARASKTGAELAELDDICMEGETTGHPWVTVSKGRIGLGYSDYLAFTPENRTPTEVLWLGVSKERASFIAEETLTNEGLVREAVGVSRFESFCAKLAARGGSVDTHYMMPVHPWQWDHMIVPHFAADIAAGHIVFLGKGDDLYLPQQSVRTLSNISHPEKSTLKLCMTILNTAVYRGIPGKRALTAAPLTTWLDQLLARDQFLSEECGLVLLGERAGMHYVHPQFSTIEGAPYQFNEMLGCMWRDSLSAHLKSGETGLPLAALLHAGTDGKPVVQALAEKSGMTVSEWTARLFDVVIPPVFHLLAKHGLAFSAHGQNATLILKNGRPERLALRDFIDDVIVCDQAFPESATLPEEVRAVLLCLPADFLIHFIQTTLFICVFRYMSVLLDQRSGLPEHAFWGLARSSILAYQKRFPEMASRFATFDLFGDEYPRLCLNRVRLFTHGYADDDERPVPDFQGMVDNPLVAFDKRSNAA.

The protein belongs to the IucA/IucC family.

It functions in the pathway siderophore biosynthesis; rhizobactin biosynthesis. This is Rhizobactin siderophore biosynthesis protein RhbF (rhbF) from Rhizobium meliloti (strain 1021) (Ensifer meliloti).